A 123-amino-acid polypeptide reads, in one-letter code: Large ribosomal subunit protein bL21 (123 aa).

It belongs to the bacterial ribosomal protein bL21 family. In terms of assembly, part of the 50S ribosomal subunit. Contacts protein L20.

Its function is as follows. This protein binds to 23S rRNA in the presence of protein L20. The chain is Large ribosomal subunit protein bL21 from Rippkaea orientalis (strain PCC 8801 / RF-1) (Cyanothece sp. (strain PCC 8801)).